The chain runs to 302 residues: Forkhead box protein R2 (302 aa).

A DNA-binding region (fork-head) is located at residues 183 to 285 (RPPLNYSHLV…RVLAYARRES (103 aa)).

It is found in the nucleus. This Mus musculus (Mouse) protein is Forkhead box protein R2 (Foxr2).